The chain runs to 545 residues: CTP synthase (545 aa).

Residues 1–266 (MTTNYIFVTG…DDLVCARFGI (266 aa)) form an amidoligase domain region. Ser-14 serves as a coordination point for CTP. Position 14 (Ser-14) interacts with UTP. ATP-binding positions include 15-20 (SLGKGI) and Asp-72. Positions 72 and 140 each coordinate Mg(2+). CTP-binding positions include 147–149 (DIE), 187–192 (KTKPTQ), and Lys-223. Residues 187–192 (KTKPTQ) and Lys-223 each bind UTP. 239-241 (KDV) provides a ligand contact to ATP. Residues 291-542 (TIGMVGKYIE…IKAAGENARG (252 aa)) enclose the Glutamine amidotransferase type-1 domain. Position 352 (Gly-352) interacts with L-glutamine. The active-site Nucleophile; for glutamine hydrolysis is Cys-379. L-glutamine contacts are provided by residues 380 to 383 (LGMQ), Glu-403, and Arg-470. Residues His-515 and Glu-517 contribute to the active site.

The protein belongs to the CTP synthase family. As to quaternary structure, homotetramer.

It carries out the reaction UTP + L-glutamine + ATP + H2O = CTP + L-glutamate + ADP + phosphate + 2 H(+). The enzyme catalyses L-glutamine + H2O = L-glutamate + NH4(+). It catalyses the reaction UTP + NH4(+) + ATP = CTP + ADP + phosphate + 2 H(+). Its pathway is pyrimidine metabolism; CTP biosynthesis via de novo pathway; CTP from UDP: step 2/2. Its activity is regulated as follows. Allosterically activated by GTP, when glutamine is the substrate; GTP has no effect on the reaction when ammonia is the substrate. The allosteric effector GTP functions by stabilizing the protein conformation that binds the tetrahedral intermediate(s) formed during glutamine hydrolysis. Inhibited by the product CTP, via allosteric rather than competitive inhibition. Catalyzes the ATP-dependent amination of UTP to CTP with either L-glutamine or ammonia as the source of nitrogen. Regulates intracellular CTP levels through interactions with the four ribonucleotide triphosphates. In Vibrio vulnificus (strain CMCP6), this protein is CTP synthase.